A 210-amino-acid polypeptide reads, in one-letter code: MKNKLDLSLYLVASQGNKSEECFLNTLENAIKGGVSIIQLREKELNAREFYKLGLKVQKLCKAYKIPFLINDRVDIALALDADGVHLGQEDLEVKLARKLLGDEKIIGLSLKKLEQLEFIQGANYLGCGAIKATPTKESSLLSLELLSQICDKSPIGVVAIGGVDKAVLDELKGINLSGVAVVRAIMDAKDAFLAAKELKRKIYENLPLK.

4-amino-2-methyl-5-(diphosphooxymethyl)pyrimidine contacts are provided by residues 39–43 and N71; that span reads QLREK. The Mg(2+) site is built by D72 and D91. S110 lines the 4-amino-2-methyl-5-(diphosphooxymethyl)pyrimidine pocket. 134 to 136 contacts 2-[(2R,5Z)-2-carboxy-4-methylthiazol-5(2H)-ylidene]ethyl phosphate; sequence TPT. Residue K137 participates in 4-amino-2-methyl-5-(diphosphooxymethyl)pyrimidine binding. G163 is a 2-[(2R,5Z)-2-carboxy-4-methylthiazol-5(2H)-ylidene]ethyl phosphate binding site.

This sequence belongs to the thiamine-phosphate synthase family. The cofactor is Mg(2+).

The catalysed reaction is 2-[(2R,5Z)-2-carboxy-4-methylthiazol-5(2H)-ylidene]ethyl phosphate + 4-amino-2-methyl-5-(diphosphooxymethyl)pyrimidine + 2 H(+) = thiamine phosphate + CO2 + diphosphate. It catalyses the reaction 2-(2-carboxy-4-methylthiazol-5-yl)ethyl phosphate + 4-amino-2-methyl-5-(diphosphooxymethyl)pyrimidine + 2 H(+) = thiamine phosphate + CO2 + diphosphate. The enzyme catalyses 4-methyl-5-(2-phosphooxyethyl)-thiazole + 4-amino-2-methyl-5-(diphosphooxymethyl)pyrimidine + H(+) = thiamine phosphate + diphosphate. Its pathway is cofactor biosynthesis; thiamine diphosphate biosynthesis; thiamine phosphate from 4-amino-2-methyl-5-diphosphomethylpyrimidine and 4-methyl-5-(2-phosphoethyl)-thiazole: step 1/1. Its function is as follows. Condenses 4-methyl-5-(beta-hydroxyethyl)thiazole monophosphate (THZ-P) and 2-methyl-4-amino-5-hydroxymethyl pyrimidine pyrophosphate (HMP-PP) to form thiamine monophosphate (TMP). The sequence is that of Thiamine-phosphate synthase from Campylobacter jejuni subsp. jejuni serotype O:6 (strain 81116 / NCTC 11828).